Reading from the N-terminus, the 356-residue chain is Isopentenyl-diphosphate delta-isomerase (356 aa).

8–9 is a binding site for substrate; it reads RK. Residues 66-68, S96, and N124 each bind FMN; that span reads AIT. 96-98 contacts substrate; it reads SQR. Position 160 (Q160) interacts with substrate. Residue E161 participates in Mg(2+) binding. Residues K201, T231, 280–282, and 301–302 each bind FMN; these read GIR and AL.

This sequence belongs to the IPP isomerase type 2 family. Homooctamer. Dimer of tetramers. Requires FMN as cofactor. NADPH is required as a cofactor. It depends on Mg(2+) as a cofactor.

Its subcellular location is the cytoplasm. The catalysed reaction is isopentenyl diphosphate = dimethylallyl diphosphate. In terms of biological role, involved in the biosynthesis of isoprenoids. Catalyzes the 1,3-allylic rearrangement of the homoallylic substrate isopentenyl (IPP) to its allylic isomer, dimethylallyl diphosphate (DMAPP). The sequence is that of Isopentenyl-diphosphate delta-isomerase from Methanococcus aeolicus (strain ATCC BAA-1280 / DSM 17508 / OCM 812 / Nankai-3).